The primary structure comprises 82 residues: MMAKLMITVMMVLLLSLQQGADGRSERWRKNQMAASSIMRNLITARIDPPRYCNHIICYEDSECSQWCTAGCNSITSKCDTL.

The N-terminal stretch at 1–23 (MMAKLMITVMMVLLLSLQQGADG) is a signal peptide. A propeptide spanning residues 24 to 50 (RSERWRKNQMAASSIMRNLITARIDPP) is cleaved from the precursor. 3 cysteine pairs are disulfide-bonded: cysteine 53/cysteine 68, cysteine 58/cysteine 72, and cysteine 64/cysteine 79.

Belongs to the Pg turripeptide superfamily. In terms of tissue distribution, expressed by the venom duct.

The protein localises to the secreted. This is Turripeptide IX-23 from Gemmula speciosa (Splendid gem-turris).